Consider the following 286-residue polypeptide: MPDTDNTKIIDGRAIAKKVEAEVKADVERLVREKGITPGLSAILVGEDPASKMYVRLKHKACGRVGIFAEDQHLPEDITQEELLEAISSLNARKDIHGILLQLPLPKHLNEQEAMNAIDPAKDADGFHPFNMGQLLIGVEELVPCTPKGIIRALEEYGVEIQGKHAVIVGHSNVVGKPMAAMLVNRNATVSICHVFTKDVTKFTRDADILVVATGVKHLIKEDMVKEGSVIFDVGITEENGKVYGDVDFENVIKKASRVTPVPGGVGPVTIATLMQHVLMSAQKTA.

NADP(+) contacts are provided by residues Gly170–Ser172 and Ile236.

The protein belongs to the tetrahydrofolate dehydrogenase/cyclohydrolase family. As to quaternary structure, homodimer.

It catalyses the reaction (6R)-5,10-methylene-5,6,7,8-tetrahydrofolate + NADP(+) = (6R)-5,10-methenyltetrahydrofolate + NADPH. The enzyme catalyses (6R)-5,10-methenyltetrahydrofolate + H2O = (6R)-10-formyltetrahydrofolate + H(+). The protein operates within one-carbon metabolism; tetrahydrofolate interconversion. Functionally, catalyzes the oxidation of 5,10-methylenetetrahydrofolate to 5,10-methenyltetrahydrofolate and then the hydrolysis of 5,10-methenyltetrahydrofolate to 10-formyltetrahydrofolate. In Methanococcoides burtonii (strain DSM 6242 / NBRC 107633 / OCM 468 / ACE-M), this protein is Bifunctional protein FolD.